Reading from the N-terminus, the 369-residue chain is Caffeine synthase 1 (369 aa).

An S-adenosyl-L-homocysteine-binding site is contributed by Tyr-24. Position 31 (Thr-31) interacts with caffeine. S-adenosyl-L-homocysteine contacts are provided by Cys-66, Asn-71, Asp-103, Leu-104, Ser-138, and Phe-139. Positions 156, 159, and 160 each coordinate caffeine. Asn-177 contributes to the Mg(2+) binding site. Arg-225 provides a ligand contact to caffeine. Mg(2+) is bound by residues Asp-263, Phe-265, and Asn-266. Phe-321 contributes to the caffeine binding site.

Belongs to the methyltransferase superfamily. Type-7 methyltransferase family. Mg(2+) is required as a cofactor.

The enzyme catalyses theobromine + S-adenosyl-L-methionine = caffeine + S-adenosyl-L-homocysteine + H(+). It carries out the reaction 7-methylxanthine + S-adenosyl-L-methionine = theobromine + S-adenosyl-L-homocysteine + H(+). It participates in alkaloid biosynthesis. Its function is as follows. Involved in the biosynthesis of caffeine. Catalyzes the conversion of 7-methylxanthine (7mX) to theobromine and of theobromine to caffeine. The sequence is that of Caffeine synthase 1 from Camellia crassicolumna (Evergreen tea).